The primary structure comprises 372 residues: 3-dehydroquinate synthase (372 aa).

NAD(+)-binding positions include 116-120, 140-141, lysine 153, lysine 162, and 180-183; these read GVVGD, TT, and TLNT. 3 residues coordinate Zn(2+): glutamate 195, histidine 260, and histidine 277.

The protein belongs to the sugar phosphate cyclases superfamily. Dehydroquinate synthase family. It depends on Co(2+) as a cofactor. Zn(2+) serves as cofactor. Requires NAD(+) as cofactor.

The protein localises to the cytoplasm. It catalyses the reaction 7-phospho-2-dehydro-3-deoxy-D-arabino-heptonate = 3-dehydroquinate + phosphate. Its pathway is metabolic intermediate biosynthesis; chorismate biosynthesis; chorismate from D-erythrose 4-phosphate and phosphoenolpyruvate: step 2/7. Its function is as follows. Catalyzes the conversion of 3-deoxy-D-arabino-heptulosonate 7-phosphate (DAHP) to dehydroquinate (DHQ). The chain is 3-dehydroquinate synthase from Prochlorococcus marinus (strain MIT 9303).